Here is a 218-residue protein sequence, read N- to C-terminus: Probable transaldolase (218 aa).

Catalysis depends on K83, which acts as the Schiff-base intermediate with substrate.

The protein belongs to the transaldolase family. Type 3B subfamily.

The protein localises to the cytoplasm. The enzyme catalyses D-sedoheptulose 7-phosphate + D-glyceraldehyde 3-phosphate = D-erythrose 4-phosphate + beta-D-fructose 6-phosphate. Its pathway is carbohydrate degradation; pentose phosphate pathway; D-glyceraldehyde 3-phosphate and beta-D-fructose 6-phosphate from D-ribose 5-phosphate and D-xylulose 5-phosphate (non-oxidative stage): step 2/3. Transaldolase is important for the balance of metabolites in the pentose-phosphate pathway. This chain is Probable transaldolase, found in Parvibaculum lavamentivorans (strain DS-1 / DSM 13023 / NCIMB 13966).